A 1940-amino-acid polypeptide reads, in one-letter code: Myosin-13 (1940 aa).

A Myosin N-terminal SH3-like domain is found at 33 to 82 (DSKKACFAMDDKEMYVKGMIQSRENDKVTVKTLDDRTLTLNSDQVFPMNP). A Myosin motor domain is found at 86–782 (DKIEDMAMMT…LLGLLEEMRD (697 aa)). Position 130 is an N6,N6,N6-trimethyllysine (lysine 130). 179-186 (GESGAGKT) contributes to the ATP binding site. 2 actin-binding regions span residues 659–681 (LNKL…IPNE) and 761–775 (RFGH…GLLG). Positions 785 to 814 (LVTLMTRTQAICRGYLMRVEFKKMMERRES) constitute an IQ domain. Residues 843 to 1940 (LLKSAEAERE…RDVGAQKMEE (1098 aa)) adopt a coiled-coil conformation. Residues 1886–1940 (RQAEEAEEQANTQMSKCRRVQHELEEAEERADIAESQVNKLRAKSRDVGAQKMEE) form a disordered region. Residues 1929-1940 (KSRDVGAQKMEE) show a composition bias toward basic and acidic residues.

Belongs to the TRAFAC class myosin-kinesin ATPase superfamily. Myosin family. Muscle myosin is a hexameric protein that consists of 2 heavy chain subunits (MHC), 2 alkali light chain subunits (MLC) and 2 regulatory light chain subunits (MLC-2).

The protein localises to the cytoplasm. Its subcellular location is the myofibril. Functionally, fast twitching myosin mediating the high-velocity and low-tension contractions of specific striated muscles. The chain is Myosin-13 (MYH13) from Canis lupus familiaris (Dog).